We begin with the raw amino-acid sequence, 118 residues long: Hydrogenase maturation factor HypA (118 aa).

Residue His2 coordinates Ni(2+). The Zn(2+) site is built by Cys73, Cys76, Cys93, and Cys96.

It belongs to the HypA/HybF family.

Involved in the maturation of [NiFe] hydrogenases. Required for nickel insertion into the metal center of the hydrogenase. The protein is Hydrogenase maturation factor HypA of Lawsonia intracellularis (strain PHE/MN1-00).